The chain runs to 379 residues: Putative beta-glucosidase 6 (379 aa).

Residues 1–20 (MEKTFALITIFLAFAFSGKC) form the signal peptide. A beta-D-glucoside is bound by residues Q43, H141, and 186-187 (NE). Residue E187 is the Proton donor of the active site. C206 and C213 are disulfide-bonded. N217 is a glycosylation site (N-linked (GlcNAc...) asparagine). Residue Y329 participates in a beta-D-glucoside binding. N362 carries N-linked (GlcNAc...) asparagine glycosylation.

Belongs to the glycosyl hydrolase 1 family.

It carries out the reaction Hydrolysis of terminal, non-reducing beta-D-glucosyl residues with release of beta-D-glucose.. The sequence is that of Putative beta-glucosidase 6 from Arabidopsis thaliana (Mouse-ear cress).